A 151-amino-acid polypeptide reads, in one-letter code: Probable chemoreceptor glutamine deamidase CheD (151 aa).

The protein belongs to the CheD family.

The enzyme catalyses L-glutaminyl-[protein] + H2O = L-glutamyl-[protein] + NH4(+). Its function is as follows. Probably deamidates glutamine residues to glutamate on methyl-accepting chemotaxis receptors (MCPs), playing an important role in chemotaxis. The protein is Probable chemoreceptor glutamine deamidase CheD of Methanosarcina barkeri (strain Fusaro / DSM 804).